The following is a 222-amino-acid chain: ATP synthase F(0) complex subunit a (222 aa).

A run of 6 helical transmembrane segments spans residues 7-27 (AFFD…AILL), 64-84 (WSLM…LGLL), 93-113 (QLTV…VLGF), 132-152 (FLIP…PITL), 160-180 (ITAG…LLSV), and 197-219 (ILEL…LYLH).

This sequence belongs to the ATPase A chain family. Component of the ATP synthase complex composed at least of ATP5F1A/subunit alpha, ATP5F1B/subunit beta, ATP5MC1/subunit c (homooctomer), MT-ATP6/subunit a, MT-ATP8/subunit 8, ATP5ME/subunit e, ATP5MF/subunit f, ATP5MG/subunit g, ATP5MK/subunit k, ATP5MJ/subunit j, ATP5F1C/subunit gamma, ATP5F1D/subunit delta, ATP5F1E/subunit epsilon, ATP5PF/subunit F6, ATP5PB/subunit b, ATP5PD/subunit d, ATP5PO/subunit OSCP. ATP synthase complex consists of a soluble F(1) head domain (subunits alpha(3) and beta(3)) - the catalytic core - and a membrane F(0) domain - the membrane proton channel (subunits c, a, 8, e, f, g, k and j). These two domains are linked by a central stalk (subunits gamma, delta, and epsilon) rotating inside the F1 region and a stationary peripheral stalk (subunits F6, b, d, and OSCP). Interacts with DNAJC30; interaction is direct.

It localises to the mitochondrion inner membrane. The catalysed reaction is H(+)(in) = H(+)(out). Its function is as follows. Subunit a, of the mitochondrial membrane ATP synthase complex (F(1)F(0) ATP synthase or Complex V) that produces ATP from ADP in the presence of a proton gradient across the membrane which is generated by electron transport complexes of the respiratory chain. ATP synthase complex consist of a soluble F(1) head domain - the catalytic core - and a membrane F(1) domain - the membrane proton channel. These two domains are linked by a central stalk rotating inside the F(1) region and a stationary peripheral stalk. During catalysis, ATP synthesis in the catalytic domain of F(1) is coupled via a rotary mechanism of the central stalk subunits to proton translocation. With the subunit c (ATP5MC1), forms the proton-conducting channel in the F(0) domain, that contains two crucial half-channels (inlet and outlet) that facilitate proton movement from the mitochondrial intermembrane space (IMS) into the matrix. Protons are taken up via the inlet half-channel and released through the outlet half-channel, following a Grotthuss mechanism. The chain is ATP synthase F(0) complex subunit a from Elephas maximus (Indian elephant).